The sequence spans 238 residues: Pyridoxine 5'-phosphate synthase (238 aa).

Asn7 contributes to the 3-amino-2-oxopropyl phosphate binding site. Position 9-10 (9-10 (DH)) interacts with 1-deoxy-D-xylulose 5-phosphate. 3-amino-2-oxopropyl phosphate is bound at residue Arg18. Residue His43 is the Proton acceptor of the active site. Positions 45 and 50 each coordinate 1-deoxy-D-xylulose 5-phosphate. Glu70 acts as the Proton acceptor in catalysis. Thr100 lines the 1-deoxy-D-xylulose 5-phosphate pocket. The Proton donor role is filled by His190. 3-amino-2-oxopropyl phosphate-binding positions include Gly191 and 212–213 (GH).

The protein belongs to the PNP synthase family. In terms of assembly, homooctamer; tetramer of dimers.

Its subcellular location is the cytoplasm. It catalyses the reaction 3-amino-2-oxopropyl phosphate + 1-deoxy-D-xylulose 5-phosphate = pyridoxine 5'-phosphate + phosphate + 2 H2O + H(+). It participates in cofactor biosynthesis; pyridoxine 5'-phosphate biosynthesis; pyridoxine 5'-phosphate from D-erythrose 4-phosphate: step 5/5. In terms of biological role, catalyzes the complicated ring closure reaction between the two acyclic compounds 1-deoxy-D-xylulose-5-phosphate (DXP) and 3-amino-2-oxopropyl phosphate (1-amino-acetone-3-phosphate or AAP) to form pyridoxine 5'-phosphate (PNP) and inorganic phosphate. This chain is Pyridoxine 5'-phosphate synthase, found in Prochlorococcus marinus (strain MIT 9215).